Here is a 62-residue protein sequence, read N- to C-terminus: U-stichotoxin-Hau1a (62 aa).

The signal sequence occupies residues 1 to 21; sequence MKPAIFLMLFVAMFLISEGEG. Residues 22–31 constitute a propeptide that is removed on maturation; that stretch reads FKPKDAPQER. Residue P36 is modified to Hydroxyproline. 2 disulfide bridges follow: C41–C53 and C44–C59.

The protein belongs to the Hau1a/HC18/HC19 family.

It localises to the secreted. It is found in the nematocyst. In terms of biological role, toxin that is lethal to crab. Does not produce the typical symptoms associated with sodium channel toxins in crabs, suggesting that it likely does not act on sodium channels. The chain is U-stichotoxin-Hau1a from Heteractis aurora (Banded sea anemone).